A 135-amino-acid polypeptide reads, in one-letter code: Endoribonuclease YbeY (135 aa).

Positions 94, 98, and 104 each coordinate Zn(2+).

The protein belongs to the endoribonuclease YbeY family. Zn(2+) is required as a cofactor.

The protein localises to the cytoplasm. Single strand-specific metallo-endoribonuclease involved in late-stage 70S ribosome quality control and in maturation of the 3' terminus of the 16S rRNA. The polypeptide is Endoribonuclease YbeY (Campylobacter jejuni subsp. jejuni serotype O:2 (strain ATCC 700819 / NCTC 11168)).